A 462-amino-acid polypeptide reads, in one-letter code: Threonine--tRNA ligase, mitochondrial (462 aa).

Residues 1-45 (MKIQLVRWHCSRNALWNRAFYSTRKATKNASSATPATMTSMVSQR) constitute a mitochondrion transit peptide.

This sequence belongs to the class-II aminoacyl-tRNA synthetase family.

The protein resides in the mitochondrion matrix. It catalyses the reaction tRNA(Thr) + L-threonine + ATP = L-threonyl-tRNA(Thr) + AMP + diphosphate + H(+). The polypeptide is Threonine--tRNA ligase, mitochondrial (MST1) (Saccharomyces cerevisiae (strain ATCC 204508 / S288c) (Baker's yeast)).